The following is a 208-amino-acid chain: Thymidylate kinase (208 aa).

10 to 17 (GPEGSGKS) contacts ATP.

This sequence belongs to the thymidylate kinase family.

The catalysed reaction is dTMP + ATP = dTDP + ADP. Phosphorylation of dTMP to form dTDP in both de novo and salvage pathways of dTTP synthesis. This chain is Thymidylate kinase, found in Bacillus cytotoxicus (strain DSM 22905 / CIP 110041 / 391-98 / NVH 391-98).